The sequence spans 348 residues: Alcohol dehydrogenase 1 (348 aa).

Serine 2 is modified (N-acetylserine). Residue cysteine 44 coordinates Zn(2+). NAD(+) contacts are provided by histidine 45, threonine 46, and histidine 49. Zn(2+) contacts are provided by histidine 67, glutamate 68, cysteine 98, cysteine 101, cysteine 104, cysteine 112, and cysteine 154. Glycine 181, glycine 182, leucine 183, aspartate 202, and lysine 207 together coordinate NAD(+). Serine 213 bears the Phosphoserine mark. Phenylalanine 222 is a binding site for NAD(+). Threonine 223 is subject to Phosphothreonine. Residues lysine 226 and lysine 234 each participate in a glycyl lysine isopeptide (Lys-Gly) (interchain with G-Cter in ubiquitin) cross-link. Residues valine 269 and methionine 271 each contribute to the NAD(+) site. Phosphoserine is present on serine 279. Lysine 287 is covalently cross-linked (Glycyl lysine isopeptide (Lys-Gly) (interchain with G-Cter in ubiquitin)). NAD(+)-binding residues include serine 294 and valine 296. Phosphoserine is present on serine 316. Lysine 319 is covalently cross-linked (Glycyl lysine isopeptide (Lys-Gly) (interchain with G-Cter in ubiquitin)). Arginine 341 contacts NAD(+).

It belongs to the zinc-containing alcohol dehydrogenase family. As to quaternary structure, homotetramer. It depends on Zn(2+) as a cofactor.

The protein localises to the cytoplasm. The enzyme catalyses a primary alcohol + NAD(+) = an aldehyde + NADH + H(+). It catalyses the reaction a secondary alcohol + NAD(+) = a ketone + NADH + H(+). It carries out the reaction ethanol + NAD(+) = acetaldehyde + NADH + H(+). The catalysed reaction is allyl alcohol + NADP(+) = acrolein + NADPH + H(+). The enzyme catalyses 1-propanol + NAD(+) = propanal + NADH + H(+). It catalyses the reaction butan-1-ol + NAD(+) = butanal + NADH + H(+). It carries out the reaction hexan-1-ol + NAD(+) = hexanal + NADH + H(+). The catalysed reaction is (R)-lactaldehyde + NAD(+) = methylglyoxal + NADH + H(+). The enzyme catalyses octan-1-ol + NAD(+) = octanal + NADH + H(+). It catalyses the reaction butan-2-ol + NAD(+) = butan-2-one + NADH + H(+). It carries out the reaction propan-2-ol + NAD(+) = acetone + NADH + H(+). The catalysed reaction is isobutanol + NAD(+) = 2-methylpropanal + NADH + H(+). Functionally, preferentially fermentative isozyme that reduces acetaldehyde to ethanol during the fermentation of glucose. Major enzyme required for the conversion of acetaldehyde to ethanol. Plays a key role in the carbohydrate metabolism through the regeneration of NAD(+) from glycolytic NADH. In the reverse reaction, preferentially catalyzes the conversion of primary unbranched alcohols to their corresponding aldehydes. Also shows activity toward secondary alcohols. Most active with ethanol, and its activity decreases as the size of the alcohol is increased. This Saccharomyces cerevisiae (strain ATCC 204508 / S288c) (Baker's yeast) protein is Alcohol dehydrogenase 1 (ADH1).